The chain runs to 602 residues: Threonine--tRNA ligase (602 aa).

The interval 208 to 499 (DHRKLGTELK…LTEHCAGEFP (292 aa)) is catalytic. Zn(2+)-binding residues include cysteine 300, histidine 351, and histidine 476.

It belongs to the class-II aminoacyl-tRNA synthetase family. As to quaternary structure, homodimer. It depends on Zn(2+) as a cofactor.

It is found in the cytoplasm. The catalysed reaction is tRNA(Thr) + L-threonine + ATP = L-threonyl-tRNA(Thr) + AMP + diphosphate + H(+). Catalyzes the attachment of threonine to tRNA(Thr) in a two-step reaction: L-threonine is first activated by ATP to form Thr-AMP and then transferred to the acceptor end of tRNA(Thr). Also edits incorrectly charged L-seryl-tRNA(Thr). In Campylobacter jejuni subsp. jejuni serotype O:23/36 (strain 81-176), this protein is Threonine--tRNA ligase.